A 122-amino-acid chain; its full sequence is Large ribosomal subunit protein uL18 (122 aa).

Residues 1 to 21 (MSKLSRKQQTQKRHRRLRRHL) show a composition bias toward basic residues. Residues 1 to 26 (MSKLSRKQQTQKRHRRLRRHLTGTSD) form a disordered region.

The protein belongs to the universal ribosomal protein uL18 family. In terms of assembly, part of the 50S ribosomal subunit; part of the 5S rRNA/L5/L18/L25 subcomplex. Contacts the 5S and 23S rRNAs.

Its function is as follows. This is one of the proteins that bind and probably mediate the attachment of the 5S RNA into the large ribosomal subunit, where it forms part of the central protuberance. This is Large ribosomal subunit protein uL18 from Parasynechococcus marenigrum (strain WH8102).